The primary structure comprises 194 residues: Large ribosomal subunit protein uL6x (194 aa).

The residue at position 75 (Thr-75) is a Phosphothreonine.

It belongs to the universal ribosomal protein uL6 family.

The sequence is that of Large ribosomal subunit protein uL6x (RPL9D) from Arabidopsis thaliana (Mouse-ear cress).